The primary structure comprises 92 residues: Small ribosomal subunit protein uS19 (92 aa).

The protein belongs to the universal ribosomal protein uS19 family.

Protein S19 forms a complex with S13 that binds strongly to the 16S ribosomal RNA. This is Small ribosomal subunit protein uS19 from Rickettsia felis (strain ATCC VR-1525 / URRWXCal2) (Rickettsia azadi).